A 339-amino-acid chain; its full sequence is Glycerol-3-phosphate dehydrogenase [NAD(P)+] (339 aa).

NADPH contacts are provided by serine 15, tyrosine 16, histidine 36, and lysine 110. Positions 110, 139, and 141 each coordinate sn-glycerol 3-phosphate. Residue alanine 143 coordinates NADPH. Positions 195, 248, 258, 259, and 260 each coordinate sn-glycerol 3-phosphate. Lysine 195 functions as the Proton acceptor in the catalytic mechanism. Arginine 259 contacts NADPH. NADPH is bound by residues valine 283 and glutamate 285.

This sequence belongs to the NAD-dependent glycerol-3-phosphate dehydrogenase family.

The protein localises to the cytoplasm. It carries out the reaction sn-glycerol 3-phosphate + NAD(+) = dihydroxyacetone phosphate + NADH + H(+). The catalysed reaction is sn-glycerol 3-phosphate + NADP(+) = dihydroxyacetone phosphate + NADPH + H(+). It functions in the pathway membrane lipid metabolism; glycerophospholipid metabolism. Functionally, catalyzes the reduction of the glycolytic intermediate dihydroxyacetone phosphate (DHAP) to sn-glycerol 3-phosphate (G3P), the key precursor for phospholipid synthesis. This is Glycerol-3-phosphate dehydrogenase [NAD(P)+] from Shigella dysenteriae serotype 1 (strain Sd197).